Here is a 146-residue protein sequence, read N- to C-terminus: VHLSGEEKAAVTGLWGKVKVDEVGGEALGRLLVVYPWTQRFFDSFGDLSSASAVMGNPKVKAHGKKVLDSFSEGLQHLDNLKGTFAKLSELHCDKLHVDPENFRLLGNVLVCVLARHFGKEFTPQVQAAYQKVVAGVANALAHKYH.

Position 1 is an N-acetylvaline (Val-1). The region spanning 2-146 (HLSGEEKAAV…VANALAHKYH (145 aa)) is the Globin domain. Thr-12 is subject to Phosphothreonine. Phosphoserine is present on Ser-44. Lys-59 bears the N6-acetyllysine mark. His-63 provides a ligand contact to heme b. Position 82 is an N6-acetyllysine (Lys-82). His-92 is a binding site for heme b. At Cys-93 the chain carries S-nitrosocysteine. Position 144 is an N6-acetyllysine (Lys-144).

The protein belongs to the globin family. Heterotetramer of two alpha chains and two beta chains. Red blood cells.

Involved in oxygen transport from the lung to the various peripheral tissues. The protein is Hemoglobin subunit beta (HBB) of Pteropus alecto (Black flying fox).